We begin with the raw amino-acid sequence, 492 residues long: Probable cobyric acid synthase (492 aa).

A GATase cobBQ-type domain is found at 252 to 444; sequence PIEVNVVKFS…FHGILENFEF (193 aa). Catalysis depends on Cys330, which acts as the Nucleophile. The active site involves His436.

It belongs to the CobB/CobQ family. CobQ subfamily.

It participates in cofactor biosynthesis; adenosylcobalamin biosynthesis. In terms of biological role, catalyzes amidations at positions B, D, E, and G on adenosylcobyrinic A,C-diamide. NH(2) groups are provided by glutamine, and one molecule of ATP is hydrogenolyzed for each amidation. In Methanococcus maripaludis (strain DSM 14266 / JCM 13030 / NBRC 101832 / S2 / LL), this protein is Probable cobyric acid synthase.